The chain runs to 461 residues: MSRQVVRSSKFRHVFGQPAKADQCYEDVRVSQNTWDSGFCAVNPKFVALICEASGGGAFLVLPLGKTGRVDKNVPMVCGHTAPVLDIAWCPHNDNVIASGSEDCSVMVWEIPDGGLTLPLREPVVTLEGHTKRVGIVAWHPTAQNVLLSAGCDNVILVWDVGTGVAVLTLGSDVHPDTIYSVDWSRDGALICTSCRDKRVRIIEPRKGTIVAEKDRPHEGTRPVRAVFVSDGKILTTGFSRMSERQVALWDTKHLEEPLSLQELDTSSGVLLPFFDPDTNIVYLCGKGDSSIRYFEITSEAPFLHYLSMFSSKESQRGMGYMPKRGLEVNKCEIARFYKLHERKCEPIAMTVPRKSDLFQEDLYPPTAGPDAALTAEEWLGGRDAGPLLISLKDGYVPPKSRELRVNRGLDTGRKRTTPEASGAPSSDAISRLEEEMRKLQATVQELQKRLDRLEETVQAK.

Ser-2 carries the N-acetylserine modification. Ser-2 is modified (phosphoserine; by PKC). WD repeat units follow at residues 13–63 (HVFG…LVLP), 73–110 (NVPMVCGHTAPVLDIAWCPHNDNVIASGSEDCSVMVWE), 123–160 (PVVTLEGHTKRVGIVAWHPTAQNVLLSAGCDNVILVWD), 164–204 (GVAV…RIIE), 207–251 (KGTI…ALWD), 258–296 (PLSLQELDTSSGVLLPFFDPDTNIVYLCGKGDSSIRYFE), and 302–349 (PFLH…EPIA). The span at 404 to 418 (LRVNRGLDTGRKRTT) shows a compositional bias: basic and acidic residues. The disordered stretch occupies residues 404 to 429 (LRVNRGLDTGRKRTTPEASGAPSSDA). Thr-412 is subject to Phosphothreonine; by PKC. At Thr-418 the chain carries Phosphothreonine. Position 422 is a phosphoserine (Ser-422). Residues 424–460 (APSSDAISRLEEEMRKLQATVQELQKRLDRLEETVQA) adopt a coiled-coil conformation. At Lys-449 the chain carries N6-acetyllysine.

This sequence belongs to the WD repeat coronin family. As to quaternary structure, binds actin. In terms of processing, phosphorylation at Thr-412 by PKC strongly down-regulates the association with actin. Polyubiquitinated by RNF128 with 'Lys-48'-linked chains, leading to proteasomal degradation. As to expression, expressed in brain, thymus, spleen, bone marrow and lymph node. Low in lung and gut.

It localises to the cytoplasm. It is found in the cytoskeleton. Its subcellular location is the cell cortex. The protein resides in the cytoplasmic vesicle. The protein localises to the phagosome membrane. Its function is as follows. May be a crucial component of the cytoskeleton of highly motile cells, functioning both in the invagination of large pieces of plasma membrane, as well as in forming protrusions of the plasma membrane involved in cell locomotion. In mycobacteria-infected macrophages, its retention on the phagosomal membrane prevents fusion between phagosomes and lysosomes. This chain is Coronin-1A (CORO1A), found in Bos taurus (Bovine).